The following is a 246-amino-acid chain: UDP-N-acetyl-D-mannosaminuronic acid transferase (246 aa).

Belongs to the glycosyltransferase 26 family.

It carries out the reaction UDP-N-acetyl-alpha-D-mannosaminouronate + N-acetyl-alpha-D-glucosaminyl-di-trans,octa-cis-undecaprenyl diphosphate = beta-D-ManNAcA-(1-&gt;4)-alpha-D-GlcNAc-di-trans,octa-cis-undecaprenyl diphosphate + UDP + H(+). Its pathway is bacterial outer membrane biogenesis; enterobacterial common antigen biosynthesis. Catalyzes the synthesis of Und-PP-GlcNAc-ManNAcA (Lipid II), the second lipid-linked intermediate involved in enterobacterial common antigen (ECA) synthesis. The sequence is that of UDP-N-acetyl-D-mannosaminuronic acid transferase from Salmonella arizonae (strain ATCC BAA-731 / CDC346-86 / RSK2980).